Reading from the N-terminus, the 359-residue chain is Peptide chain release factor 1 (359 aa).

An N5-methylglutamine modification is found at glutamine 236.

Belongs to the prokaryotic/mitochondrial release factor family. Post-translationally, methylated by PrmC. Methylation increases the termination efficiency of RF1.

The protein resides in the cytoplasm. In terms of biological role, peptide chain release factor 1 directs the termination of translation in response to the peptide chain termination codons UAG and UAA. This Streptococcus pyogenes serotype M1 protein is Peptide chain release factor 1.